The sequence spans 458 residues: N-acetylgalactosamine kinase (458 aa).

Positions 43, 49, 50, and 52 each coordinate alpha-D-galactose. 3 residues coordinate ATP: G143, S145, and S146. D190 lines the alpha-D-galactose pocket. D190 (proton acceptor) is an active-site residue. 2 residues coordinate ATP: N233 and K234.

This sequence belongs to the GHMP kinase family. GalK subfamily. Monomer.

It catalyses the reaction N-acetyl-alpha-D-galactosamine + ATP = N-acetyl-alpha-D-galactosamine 1-phosphate + ADP + H(+). In terms of biological role, acts on GalNAc. Also acts as a galactokinase when galactose is present at high concentrations. This Mus musculus (Mouse) protein is N-acetylgalactosamine kinase (Galk2).